An 80-amino-acid polypeptide reads, in one-letter code: Protein transport protein SSS1 (80 aa).

At 1 to 46 (MARASEKGEEKKQSNNQVEKLVEAPVEFVREGTQFLAKCKKPDLKE) the chain is on the cytoplasmic side. A helical membrane pass occupies residues 47–75 (YTKIVKAVGIGFIAVGIIGYAIKLIHIPI). Topologically, residues 76 to 80 (RYVIV) are extracellular.

The protein belongs to the SecE/SEC61-gamma family. As to quaternary structure, component of the heterotrimeric Sec61 complex, which is composed of SSH1, SBH1 and SSS1. Presumably three to four Sec61 heterotrimers assemble into an oligomeric ring with a central aqueous pore. In cotranslational ER import, the pore diameter varies from 9-15 A in a ribosome-free resting state to 40-60 A in a functional state when associated with the ribosome. The Sec61 complex is part of a channel-forming translocon complex whose composition seem to change dependent upon different functional states. During post-translational ER import the Sec61 complex associates with the Sec62/63 complex to form the Sec complex. SSH1 is a component of the heterotrimeric Ssh1 complex, which is composed of SSH1, SBH2 and SSS1. SSS1 interacts with OST1, OST4, SWP1 and WBP1, components of the OT complex.

The protein localises to the endoplasmic reticulum membrane. Its function is as follows. Part of the Sec61 complex, which is the major component of channel-forming translocon complex that mediates protein translocation across the endoplasmic reticulum (ER). The functional states of the translocon complex include co- and post-translational ER import, cotranslational membrane protein integration and retrograde transport of misfolded proteins out of the ER. In the cotranslational pathway, ribosomes synthesizing presecretory proteins are targeted to the translocon by the cytosolic signal recognition particle (SRP) and its ER-localized receptor. The association of the Sec61 complex with the ribosome is mediated by the 28S rRNA of the large ribosomal subunit. SRP-independent post-translational translocation requires the association of additional factors, such as the Sec62/63 complex and KAR2. Also part of the Ssh1 complex, which probably is the major component of a channel-forming translocon complex that may function exclusively in the cotranslational pathway of protein ER import. The polypeptide is Protein transport protein SSS1 (SSS1) (Saccharomyces cerevisiae (strain ATCC 204508 / S288c) (Baker's yeast)).